We begin with the raw amino-acid sequence, 107 residues long: Guanylin (107 aa).

Residues 1–20 (MNTFLLSALCLGAWAALVGA) form the signal peptide. A propeptide spanning residues 21-92 (VTVQDGDFSF…LNRLAVIAQD (72 aa)) is cleaved from the precursor. Cystine bridges form between Cys61–Cys74, Cys96–Cys104, and Cys99–Cys107.

Belongs to the guanylin family.

The protein localises to the secreted. Functionally, endogenous activator of intestinal guanylate cyclase. It stimulates this enzyme through the same receptor binding region as the heat-stable enterotoxins. This chain is Guanylin (GUCA2A), found in Cavia porcellus (Guinea pig).